The primary structure comprises 371 residues: Alanine racemase (371 aa).

The active-site Proton acceptor; specific for D-alanine is Lys39. Lys39 bears the N6-(pyridoxal phosphate)lysine mark. Arg137 is a binding site for substrate. Tyr266 functions as the Proton acceptor; specific for L-alanine in the catalytic mechanism. Met314 serves as a coordination point for substrate.

Belongs to the alanine racemase family. Requires pyridoxal 5'-phosphate as cofactor.

The catalysed reaction is L-alanine = D-alanine. Its pathway is amino-acid biosynthesis; D-alanine biosynthesis; D-alanine from L-alanine: step 1/1. Functionally, catalyzes the interconversion of L-alanine and D-alanine. May also act on other amino acids. In Desulfovibrio desulfuricans (strain ATCC 27774 / DSM 6949 / MB), this protein is Alanine racemase (alr).